Here is a 93-residue protein sequence, read N- to C-terminus: RNA-binding protein Hfq (93 aa).

The Sm domain occupies 9-68 (DPFLNALRKERIPVSIFLVNGIKLQGQIESFDQYVVLLKNAVSQMVYKHAISTVVPARNP). Low complexity predominate over residues 74 to 86 (PAMAAGATAAPAA). The interval 74–93 (PAMAAGATAAPAADEGYGNQ) is disordered.

It belongs to the Hfq family. In terms of assembly, homohexamer.

In terms of biological role, RNA chaperone that binds small regulatory RNA (sRNAs) and mRNAs to facilitate mRNA translational regulation in response to envelope stress, environmental stress and changes in metabolite concentrations. Also binds with high specificity to tRNAs. In Alcanivorax borkumensis (strain ATCC 700651 / DSM 11573 / NCIMB 13689 / SK2), this protein is RNA-binding protein Hfq.